Reading from the N-terminus, the 146-residue chain is Deoxyuridine 5'-triphosphate nucleotidohydrolase (146 aa).

Substrate contacts are provided by residues 65 to 67 (RSG), Asn-78, and 82 to 84 (TID).

Belongs to the dUTPase family. Mg(2+) serves as cofactor.

It carries out the reaction dUTP + H2O = dUMP + diphosphate + H(+). Its pathway is pyrimidine metabolism; dUMP biosynthesis; dUMP from dCTP (dUTP route): step 2/2. Its function is as follows. This enzyme is involved in nucleotide metabolism: it produces dUMP, the immediate precursor of thymidine nucleotides and it decreases the intracellular concentration of dUTP so that uracil cannot be incorporated into DNA. The chain is Deoxyuridine 5'-triphosphate nucleotidohydrolase from Treponema pallidum subsp. pallidum (strain SS14).